The following is a 172-amino-acid chain: uncharacterized protein (172 aa).

Residues 1-17 show a composition bias toward basic and acidic residues; sequence MISLDKDENEIEHHNEE. The interval 1 to 27 is disordered; that stretch reads MISLDKDENEIEHHNEENSLVEQETAP. The helical transmembrane segment at 129–151 threads the bilayer; that stretch reads IVTVLIGIIVAIFVLVVIGIAAF.

The protein localises to the membrane. This is an uncharacterized protein from Bacillus subtilis (strain 168).